Consider the following 186-residue polypeptide: Elongation factor P (186 aa).

Belongs to the elongation factor P family.

The protein resides in the cytoplasm. It participates in protein biosynthesis; polypeptide chain elongation. Its function is as follows. Involved in peptide bond synthesis. Stimulates efficient translation and peptide-bond synthesis on native or reconstituted 70S ribosomes in vitro. Probably functions indirectly by altering the affinity of the ribosome for aminoacyl-tRNA, thus increasing their reactivity as acceptors for peptidyl transferase. This Synechococcus sp. (strain RCC307) protein is Elongation factor P.